We begin with the raw amino-acid sequence, 324 residues long: Putative ribose-phosphate pyrophosphokinase 1 (324 aa).

ATP contacts are provided by residues 43–45 (DGE) and 102–103 (RQ). His136 serves as a coordination point for Mg(2+). D-ribose 5-phosphate contacts are provided by residues Asp225 and 229 to 233 (NTGQT).

Belongs to the ribose-phosphate pyrophosphokinase family. Class I subfamily. Homohexamer. Mg(2+) serves as cofactor.

The protein localises to the cytoplasm. The enzyme catalyses D-ribose 5-phosphate + ATP = 5-phospho-alpha-D-ribose 1-diphosphate + AMP + H(+). It functions in the pathway metabolic intermediate biosynthesis; 5-phospho-alpha-D-ribose 1-diphosphate biosynthesis; 5-phospho-alpha-D-ribose 1-diphosphate from D-ribose 5-phosphate (route I): step 1/1. In terms of biological role, involved in the biosynthesis of the central metabolite phospho-alpha-D-ribosyl-1-pyrophosphate (PRPP) via the transfer of pyrophosphoryl group from ATP to 1-hydroxyl of ribose-5-phosphate (Rib-5-P). In Enterococcus faecalis (strain ATCC 700802 / V583), this protein is Putative ribose-phosphate pyrophosphokinase 1.